Reading from the N-terminus, the 79-residue chain is Defensin-like protein 117 (79 aa).

The signal sequence occupies residues 1–24 (MTTTKTMLVAFVLTLFFVISSVHC). Disulfide bonds link cysteine 40-cysteine 75, cysteine 46-cysteine 68, cysteine 53-cysteine 73, and cysteine 57-cysteine 74.

Belongs to the DEFL family.

It localises to the secreted. This is Defensin-like protein 117 from Arabidopsis thaliana (Mouse-ear cress).